Here is a 287-residue protein sequence, read N- to C-terminus: 4-hydroxybenzoate octaprenyltransferase (287 aa).

6 helical membrane passes run 30 to 50 (ALWIASDGHPTWPLLVIFTVG), 89 to 109 (WEAVALAAALSLLAFLLILPL), 133 to 153 (FFAIPQAYLGIAFGFGIPMAF), 158 to 178 (GHVPLLAWVMLLANVFWSVAY), 199 to 221 (ALTFGRFDVAAIMICYAATLGIY), and 267 to 287 (NNWLGGALFVGIAAHYAAGSF).

Belongs to the UbiA prenyltransferase family. Mg(2+) serves as cofactor.

The protein localises to the cell inner membrane. The enzyme catalyses all-trans-octaprenyl diphosphate + 4-hydroxybenzoate = 4-hydroxy-3-(all-trans-octaprenyl)benzoate + diphosphate. It functions in the pathway cofactor biosynthesis; ubiquinone biosynthesis. Catalyzes the prenylation of para-hydroxybenzoate (PHB) with an all-trans polyprenyl group. Mediates the second step in the final reaction sequence of ubiquinone-8 (UQ-8) biosynthesis, which is the condensation of the polyisoprenoid side chain with PHB, generating the first membrane-bound Q intermediate 3-octaprenyl-4-hydroxybenzoate. The polypeptide is 4-hydroxybenzoate octaprenyltransferase (Paraburkholderia phytofirmans (strain DSM 17436 / LMG 22146 / PsJN) (Burkholderia phytofirmans)).